The primary structure comprises 515 residues: Putative acetolactate synthase large subunit IlvX (515 aa).

Glu48 contributes to the thiamine diphosphate binding site. FAD is bound by residues 249 to 269 and 283 to 302; these read FAEG…AGAR and DLVP…GAAD. The thiamine pyrophosphate binding stretch occupies residues 357-436; that stretch reads TCGVLLPQAT…VTTVIYNNGA (80 aa). Mg(2+) contacts are provided by Asp407 and Asn434.

The protein belongs to the TPP enzyme family. In terms of assembly, heterodimer of large catalytic subunit and small regulatory subunit. It depends on Mg(2+) as a cofactor. Thiamine diphosphate serves as cofactor.

It carries out the reaction 2 pyruvate + H(+) = (2S)-2-acetolactate + CO2. Its pathway is amino-acid biosynthesis; L-isoleucine biosynthesis; L-isoleucine from 2-oxobutanoate: step 1/4. It participates in amino-acid biosynthesis; L-valine biosynthesis; L-valine from pyruvate: step 1/4. Functionally, catalyzes the conversion of 2 pyruvate molecules into acetolactate in the first common step of the biosynthetic pathway of the branched-amino acids such as leucine, isoleucine, and valine. This is Putative acetolactate synthase large subunit IlvX (ilvX) from Mycobacterium tuberculosis (strain ATCC 25618 / H37Rv).